The sequence spans 59 residues: Large ribosomal subunit protein bL33 (59 aa).

This sequence belongs to the bacterial ribosomal protein bL33 family.

The polypeptide is Large ribosomal subunit protein bL33 (Borrelia turicatae (strain 91E135)).